The following is a 242-amino-acid chain: Carboxy-S-adenosyl-L-methionine synthase (242 aa).

Residues Tyr-39, 64–66, 89–90, 117–118, Asn-132, and Arg-199 contribute to the S-adenosyl-L-methionine site; these read GCS, DN, and DI.

Belongs to the class I-like SAM-binding methyltransferase superfamily. Cx-SAM synthase family. Homodimer.

The enzyme catalyses prephenate + S-adenosyl-L-methionine = carboxy-S-adenosyl-L-methionine + 3-phenylpyruvate + H2O. In terms of biological role, catalyzes the conversion of S-adenosyl-L-methionine (SAM) to carboxy-S-adenosyl-L-methionine (Cx-SAM). The protein is Carboxy-S-adenosyl-L-methionine synthase of Vibrio atlanticus (strain LGP32) (Vibrio splendidus (strain Mel32)).